The following is a 146-amino-acid chain: uncharacterized protein (146 aa).

The N-acetyltransferase domain occupies 7–146 (LDINYKTDEL…DGHDVLVWTP (140 aa)).

This is an uncharacterized protein from Staphylococcus saprophyticus subsp. saprophyticus (strain ATCC 15305 / DSM 20229 / NCIMB 8711 / NCTC 7292 / S-41).